A 485-amino-acid chain; its full sequence is NADH-quinone oxidoreductase subunit N (485 aa).

The next 14 helical transmembrane spans lie at 8–28 (LIALLPLLIVGLTVVVVMLSI), 35–55 (FLNATLSVIGLNAALVSLWFV), 71–91 (GFAMLYTGLVLLASLATCTFA), 105–125 (FYLLVLIAALGGILLANANHL), 127–147 (ALFLGIELISLPLFGLIGYAF), 159–179 (YTILSAAASSFLLFGMALVYA), 203–223 (LLAGFGLMIVGLGFKLSLVPF), 235–255 (PAPVSTFLATASKIAIFGVVM), 271–291 (IVLGVIAFASIIFGNLMALSQ), 297–317 (LLGYSSISHLGYLLVALIALQ), 326–346 (VGVYLAGYLFSSLGAFGVVSL), 373–393 (AAVMTVMMLSLAGIPMTLGFI), 408–430 (WWLVAAVVVGSAIGLYYYLRVAV), and 455–475 (IVVLISALLVLVLGIYPQPLI).

It belongs to the complex I subunit 2 family. In terms of assembly, NDH-1 is composed of 13 different subunits. Subunits NuoA, H, J, K, L, M, N constitute the membrane sector of the complex.

The protein resides in the cell inner membrane. The catalysed reaction is a quinone + NADH + 5 H(+)(in) = a quinol + NAD(+) + 4 H(+)(out). Functionally, NDH-1 shuttles electrons from NADH, via FMN and iron-sulfur (Fe-S) centers, to quinones in the respiratory chain. The immediate electron acceptor for the enzyme in this species is believed to be ubiquinone. Couples the redox reaction to proton translocation (for every two electrons transferred, four hydrogen ions are translocated across the cytoplasmic membrane), and thus conserves the redox energy in a proton gradient. The protein is NADH-quinone oxidoreductase subunit N of Citrobacter koseri (strain ATCC BAA-895 / CDC 4225-83 / SGSC4696).